A 243-amino-acid chain; its full sequence is Peptidyl-tRNA hydrolase (243 aa).

Residue Tyr14 participates in tRNA binding. His19 acts as the Proton acceptor in catalysis. Residues Phe64, Asn66, and Asn112 each contribute to the tRNA site. Over residues 190–205 (KAEEEKPAKEMKDAGK) the composition is skewed to basic and acidic residues. The tract at residues 190–243 (KAEEEKPAKEMKDAGKKPASQSHIHQARNHNQPKLPATGPMADMLKKMFGKKGD) is disordered. Polar residues predominate over residues 208–221 (ASQSHIHQARNHNQ).

It belongs to the PTH family. Monomer.

It localises to the cytoplasm. The catalysed reaction is an N-acyl-L-alpha-aminoacyl-tRNA + H2O = an N-acyl-L-amino acid + a tRNA + H(+). Its function is as follows. Hydrolyzes ribosome-free peptidyl-tRNAs (with 1 or more amino acids incorporated), which drop off the ribosome during protein synthesis, or as a result of ribosome stalling. Functionally, catalyzes the release of premature peptidyl moieties from peptidyl-tRNA molecules trapped in stalled 50S ribosomal subunits, and thus maintains levels of free tRNAs and 50S ribosomes. This Rhizobium johnstonii (strain DSM 114642 / LMG 32736 / 3841) (Rhizobium leguminosarum bv. viciae) protein is Peptidyl-tRNA hydrolase.